We begin with the raw amino-acid sequence, 494 residues long: Alpha-amylase-related protein (494 aa).

Residues 1-20 (MFKFTFALALCVLAAGLVLA) form the signal peptide. Gln21 carries the pyrrolidone carboxylic acid modification. A disulfide bridge connects residues Cys48 and Cys104. Residues Asn118, Gln169, and Asp178 each contribute to the Ca(2+) site. A disulfide bond links Cys157 and Cys171. Residue Arg206 coordinates chloride. The active-site Nucleophile is the Asp208. Position 212 (His212) interacts with Ca(2+). The Proton donor role is filled by Glu245. Residues Asn308 and Arg343 each coordinate chloride. Intrachain disulfides connect Cys376/Cys382, Cys418/Cys441, and Cys448/Cys460.

The protein belongs to the glycosyl hydrolase 13 family. Monomer. The cofactor is Ca(2+). It depends on chloride as a cofactor.

It localises to the secreted. It carries out the reaction Endohydrolysis of (1-&gt;4)-alpha-D-glucosidic linkages in polysaccharides containing three or more (1-&gt;4)-alpha-linked D-glucose units.. In Drosophila pseudoobscura pseudoobscura (Fruit fly), this protein is Alpha-amylase-related protein (Amyrel).